The chain runs to 304 residues: Nod factor export ATP-binding protein I (304 aa).

The 231-residue stretch at 6–236 folds into the ABC transporter domain; it reads IDFQQVEKRY…EIGCDVIEIY (231 aa). Position 38-45 (38-45) interacts with ATP; sequence GPNGAGKT.

The protein belongs to the ABC transporter superfamily. Lipooligosaccharide exporter (TC 3.A.1.102) family. The complex is composed of two ATP-binding proteins (NodI) and two transmembrane proteins (NodJ).

It is found in the cell inner membrane. In terms of biological role, part of the ABC transporter complex NodIJ involved in the export of the nodulation factors (Nod factors), the bacterial signal molecules that induce symbiosis and subsequent nodulation induction. Nod factors are LCO (lipo-chitin oligosaccharide), a modified beta-1,4-linked N-acetylglucosamine oligosaccharide. This subunit is responsible for energy coupling to the transport system. The polypeptide is Nod factor export ATP-binding protein I (Burkholderia pseudomallei (strain 1710b)).